The chain runs to 176 residues: Translation initiation factor IF-3 (176 aa).

This sequence belongs to the IF-3 family. Monomer.

It is found in the cytoplasm. In terms of biological role, IF-3 binds to the 30S ribosomal subunit and shifts the equilibrium between 70S ribosomes and their 50S and 30S subunits in favor of the free subunits, thus enhancing the availability of 30S subunits on which protein synthesis initiation begins. This Streptococcus thermophilus (strain ATCC BAA-491 / LMD-9) protein is Translation initiation factor IF-3.